A 604-amino-acid polypeptide reads, in one-letter code: Cell division cycle protein CDT1 (604 aa).

Belongs to the Cdt1 family. In terms of assembly, associates with the MCM2-7 complex. Interacts with MCM2, ORC1, ORC2 and ORC6.

The protein localises to the cytoplasm. It is found in the nucleus. DNA replication licensing factor, required for pre-replication complex assembly. Faithful duplication of the genetic material requires 'once per cell cycle' DNA replication initiation and elongation. Central to this control is the tightly regulated formation of prereplicative complexes (preRCs) at future origins of DNA replication. Required for the recruitment of the MCM2-7 helicase complex to the replication origins. This is Cell division cycle protein CDT1 (TAH11) from Saccharomyces cerevisiae (strain ATCC 204508 / S288c) (Baker's yeast).